Here is a 505-residue protein sequence, read N- to C-terminus: MAAPSAIPRRGLFIGGGWREPSLGRRLPVVNPATEATIGDIPAATAEDVELAVSAARDAFGRDGGRHWSRAPGAVRAKYLKAIAAKIKDKKSYLALLETLDSGKPLDEAAGDMEDVAACFEYYADLAEALDGKQRAPISLPMENFESYVLKEPIGVVGLITPWNYPLLMATWKVAPALAAGCTAVLKPSELASLTCLELGGICAEIGLPPGVLNIITGLGTEAGAPLASHPHVDKIAFTGSTETGKRIMITASQMVKPVSLELGGKSPLIVFDDVDIDKAVEWAMFGCFANAGQVCSATSRLLLHEKIAKRFLDRLVAWAKSIKISDPLEEGCRLGSVVSEGQYQKIMKFISTARCEGATILYGGARPQHLKRGFFIEPTIITNVSTSMQIWREEVFGPVICVKEFRTEREAVELANDTHYGLAGAVISNDLERCERISKAIQSGIVWINCSQPCFVQAPWGGNKRSGFGRELGQWGLDNYLSVKQVTKYCSDEPYGWYRPPSKL.

163-172 (WNYPLLMATW) is a binding site for betaine aldehyde. Position 240–245 (240–245 (GSTETG)) interacts with NAD(+). Betaine aldehyde-binding positions include Glu-262, 294–297 (QVCS), and Cys-455. Catalysis depends on residues Glu-262 and Cys-296. Residues 262 to 263 (EL) and Cys-296 contribute to the 4-aminobutanal site. Trp-461 serves as a coordination point for 4-aminobutanal. Positions 503–505 (SKL) match the Microbody targeting signal motif.

It belongs to the aldehyde dehydrogenase family. As to quaternary structure, homodimer.

Its subcellular location is the peroxisome. The catalysed reaction is betaine aldehyde + NAD(+) + H2O = glycine betaine + NADH + 2 H(+). Its pathway is amine and polyamine biosynthesis; betaine biosynthesis via choline pathway; betaine from betaine aldehyde: step 1/1. Functionally, dehydrogenase that can use N-acetyl-gamma-aminobutyraldehyde (NAGABald), gamma-guanidinobutyraldehyde (GGBald), betaine aldehyde (Bet-ald), gamma-aminobutyraldehyde (GAB-ald), acetaldehyde, 4-aminobutylaldehyde (AB-ald), 3-aminopropionaldehyde (AP-ald), 4-N-trimethylaminobutyraldehyde (TMAB-ald) and 3-N-trimethylaminopropionaldehyde (TMAP-ald) as substrates. Catalyzes the oxidation of GAB-ald more efficiently than Bet-ald. May convert acetaldehyde into acetate, thus facilitating the production of acetyl-CoA in peroxisomes under anaerobic conditions. The polypeptide is Betaine aldehyde dehydrogenase 1 (BADH1) (Oryza sativa subsp. japonica (Rice)).